Reading from the N-terminus, the 316-residue chain is Olfactory receptor class A-like protein 1 (316 aa).

The Extracellular segment spans residues Met1–Lys8. The chain crosses the membrane as a helical span at residues Gly9–Ala29. Residues Tyr30–Arg39 lie on the Cytoplasmic side of the membrane. Residues Leu40–Thr60 form a helical membrane-spanning segment. Topologically, residues Arg61–Cys97 are extracellular. Residues Cys81 and Cys169 are joined by a disulfide bond. A helical transmembrane segment spans residues Ile98–Leu118. Residues Ser119 to Thr132 lie on the Cytoplasmic side of the membrane. The helical transmembrane segment at Phe133 to Ala153 threads the bilayer. Topologically, residues Pro154–Ser187 are extracellular. N-linked (GlcNAc...) asparagine glycans are attached at residues Asn156 and Asn176. Residues Val188–Leu208 form a helical membrane-spanning segment. The Cytoplasmic portion of the chain corresponds to His209–Thr233. A helical membrane pass occupies residues Val234 to Tyr254. Residues Met255–Val264 lie on the Extracellular side of the membrane. The helical transmembrane segment at Val265–Ile285 threads the bilayer. Residues Ser286–Asn316 are Cytoplasmic-facing.

The protein belongs to the G-protein coupled receptor 1 family. In terms of tissue distribution, highly expressed in the olfactory rosette where it localizes to a subset of olfactory sensory neurons, mainly in the apical region of the neuroepithelium. Not detected in other tissues tested.

Its subcellular location is the cell membrane. Functionally, probable pheromone receptor. Shows high specificity for 4-hydroxyphenylacetic acid. Activation of the receptor stimulates intracellular calcium release. The protein is Olfactory receptor class A-like protein 1 of Danio rerio (Zebrafish).